A 274-amino-acid chain; its full sequence is MAVIKIKPTSPGQRGTVKISRDHLYKGEAFAGLLEPQFQKAGRNNNGHITTRHKGGGHKHHYRVVDFRRNKDAIPAKVERIEYDPNRTAHIALVCYADGERRYIIAPRNLEVGATIVSGSEAPIRVGNTLPIRNIPVGSTIHCIELKPGAGAQIARSAGTSATLLAREGVYAQVRMRSGEVRKIHIECRATIGEVANEEHSLRQLGKAGVKRWMGIRPTVRGVAMNPIDHPHGGGEGRTGEGRHAVDPWGNLTKGYRTRNNKRTQVMIVSRRKK.

The interval 224–256 (AMNPIDHPHGGGEGRTGEGRHAVDPWGNLTKGY) is disordered. Positions 229 to 246 (DHPHGGGEGRTGEGRHAV) are enriched in basic and acidic residues.

Belongs to the universal ribosomal protein uL2 family. In terms of assembly, part of the 50S ribosomal subunit. Forms a bridge to the 30S subunit in the 70S ribosome.

One of the primary rRNA binding proteins. Required for association of the 30S and 50S subunits to form the 70S ribosome, for tRNA binding and peptide bond formation. It has been suggested to have peptidyltransferase activity; this is somewhat controversial. Makes several contacts with the 16S rRNA in the 70S ribosome. The chain is Large ribosomal subunit protein uL2 from Acidovorax ebreus (strain TPSY) (Diaphorobacter sp. (strain TPSY)).